Consider the following 269-residue polypeptide: Putative pyruvate, phosphate dikinase regulatory protein (269 aa).

Residue 151-158 participates in ADP binding; it reads GISRTSKT.

This sequence belongs to the pyruvate, phosphate/water dikinase regulatory protein family. PDRP subfamily.

It catalyses the reaction N(tele)-phospho-L-histidyl/L-threonyl-[pyruvate, phosphate dikinase] + ADP = N(tele)-phospho-L-histidyl/O-phospho-L-threonyl-[pyruvate, phosphate dikinase] + AMP + H(+). The enzyme catalyses N(tele)-phospho-L-histidyl/O-phospho-L-threonyl-[pyruvate, phosphate dikinase] + phosphate + H(+) = N(tele)-phospho-L-histidyl/L-threonyl-[pyruvate, phosphate dikinase] + diphosphate. Functionally, bifunctional serine/threonine kinase and phosphorylase involved in the regulation of the pyruvate, phosphate dikinase (PPDK) by catalyzing its phosphorylation/dephosphorylation. The protein is Putative pyruvate, phosphate dikinase regulatory protein of Staphylococcus aureus.